We begin with the raw amino-acid sequence, 246 residues long: DNA polymerase sliding clamp (246 aa).

This sequence belongs to the PCNA family. Homotrimer. The subunits circularize to form a toroid; DNA passes through its center. Replication factor C (RFC) is required to load the toroid on the DNA.

Functionally, sliding clamp subunit that acts as a moving platform for DNA processing. Responsible for tethering the catalytic subunit of DNA polymerase and other proteins to DNA during high-speed replication. This Thermoplasma volcanium (strain ATCC 51530 / DSM 4299 / JCM 9571 / NBRC 15438 / GSS1) protein is DNA polymerase sliding clamp.